A 224-amino-acid polypeptide reads, in one-letter code: UPF0758 protein Maqu_3564 (224 aa).

The region spanning 102 to 224 (PLRSPADTRR…VISLAERGLM (123 aa)) is the MPN domain. 3 residues coordinate Zn(2+): histidine 173, histidine 175, and aspartate 186. The JAMM motif signature appears at 173–186 (HNHPSGVAEPSQAD).

Belongs to the UPF0758 family.

In Marinobacter nauticus (strain ATCC 700491 / DSM 11845 / VT8) (Marinobacter aquaeolei), this protein is UPF0758 protein Maqu_3564.